The primary structure comprises 183 residues: Adenylate kinase (183 aa).

Position 12 to 17 (12 to 17 (GAGKGT)) interacts with ATP. The segment at 32 to 61 (STGDLLRSEVAAGSELGKEAEAVMNRGELV) is NMP. Residues Thr33, Arg38, 59–61 (ELV), 86–89 (GFPR), and Gln93 each bind AMP. Positions 127 to 133 (SRGRADD) are LID. Position 128 (Arg128) interacts with ATP. The AMP site is built by Arg130 and Arg141. Position 169 (Gly169) interacts with ATP.

It belongs to the adenylate kinase family. As to quaternary structure, monomer.

The protein localises to the cytoplasm. The enzyme catalyses AMP + ATP = 2 ADP. Its pathway is purine metabolism; AMP biosynthesis via salvage pathway; AMP from ADP: step 1/1. Catalyzes the reversible transfer of the terminal phosphate group between ATP and AMP. Plays an important role in cellular energy homeostasis and in adenine nucleotide metabolism. This chain is Adenylate kinase, found in Synechococcus sp. (strain CC9902).